The chain runs to 349 residues: Transmembrane protein 59-like (349 aa).

Positions M1 to P22 are cleaved as a signal peptide. The N-linked (GlcNAc...) asparagine glycan is linked to N100. The helical transmembrane segment at I276–L296 threads the bilayer. The Microbody targeting signal signature appears at T347–L349.

This sequence belongs to the TMEM59 family.

The protein localises to the golgi apparatus membrane. Its function is as follows. Modulates the O-glycosylation and complex N-glycosylation steps occurring during the Golgi maturation of APP. Inhibits APP transport to the cell surface and further shedding. This chain is Transmembrane protein 59-like (TMEM59L), found in Bos taurus (Bovine).